We begin with the raw amino-acid sequence, 259 residues long: Bidirectional sugar transporter SWEET4 (259 aa).

Residues 1-10 (MVSPDTIRTA) are Extracellular-facing. Positions 10 to 94 (AIGVVGNGTA…TYIALFLAFS (85 aa)) constitute a MtN3/slv 1 domain. The chain crosses the membrane as a helical span at residues 11–31 (IGVVGNGTALVLFLSPVPTFI). At 32–44 (RIWKKGSVEQYSA) the chain is on the cytoplasmic side. Residues 45–65 (VPYVATLLNCMMWVLYGLPAV) form a helical membrane-spanning segment. Topologically, residues 66-77 (HPHSMLVITING) are extracellular. Asparagine 76 carries N-linked (GlcNAc...) asparagine glycosylation. Residues 78 to 98 (TGMAIELTYIALFLAFSLGAV) form a helical membrane-spanning segment. At 99 to 101 (RRR) the chain is on the cytoplasmic side. Residues 102 to 122 (VLLLLAAEVAFVAAVAALVLN) traverse the membrane as a helical segment. Residues 123–131 (LAHTHERRS) lie on the Extracellular side of the membrane. A helical membrane pass occupies residues 132 to 152 (MIVGILCVLFGTGMYAAPLSV). Residues 133–217 (IVGILCVLFG…ILYAIYYKST (85 aa)) enclose the MtN3/slv 2 domain. Over 153-165 (MKMVIQTKSVEYM) the chain is Cytoplasmic. A helical transmembrane segment spans residues 166–186 (PLFLSLASLVNGICWTAYALI). The Extracellular segment spans residues 187–191 (RFDLY). A helical membrane pass occupies residues 192-212 (ITIPNGLGVMFAVAQLILYAI). At 213–259 (YYKSTQQIIEARKRKEADHVAMTDVVVDSAKNNPSSGAAAAAANGRY) the chain is on the cytoplasmic side.

Belongs to the SWEET sugar transporter family. In terms of assembly, forms homooligomers and/or heterooligomers.

It is found in the cell membrane. Its function is as follows. Mediates both low-affinity uptake and efflux of sugar across the plasma membrane. This Oryza sativa subsp. indica (Rice) protein is Bidirectional sugar transporter SWEET4 (SWEET4).